The chain runs to 1020 residues: Contactin-1 (1020 aa).

The first 20 residues, 1–20 (MKMPLLVSHLLLISLTSCLG), serve as a signal peptide directing secretion. Ig-like C2-type domains lie at 41 to 131 (PIFE…ATLS), 137 to 223 (PFPP…KSVF), 241 to 326 (PADI…ARIY), 331 to 407 (PEWV…AELK), 413 to 500 (PTFE…GTLV), and 504 to 603 (PTRI…LVVR). Intrachain disulfides connect cysteine 65–cysteine 114 and cysteine 158–cysteine 211. N-linked (GlcNAc...) asparagine glycans are attached at residues asparagine 208 and asparagine 258. Cysteine 263 and cysteine 310 are oxidised to a cystine. N-linked (GlcNAc...) asparagine glycosylation is present at asparagine 338. 2 disulfide bridges follow: cysteine 352-cysteine 391 and cysteine 436-cysteine 484. N-linked (GlcNAc...) asparagine glycosylation is found at asparagine 457, asparagine 473, asparagine 494, and asparagine 521. Cysteine 526 and cysteine 585 are oxidised to a cystine. A glycan (N-linked (GlcNAc...) asparagine) is linked at asparagine 593. Fibronectin type-III domains follow at residues 608 to 706 (PPGG…TDGA), 711 to 808 (APSD…SAQD), 813 to 908 (APTE…APPS), and 909 to 1002 (QPPR…TLSS). The tract at residues 695–719 (SIPSNRIKTDGAAPNVAPSDVGGGG) is disordered. Residue asparagine 935 is glycosylated (N-linked (GlcNAc...) asparagine). Serine 1001 is lipidated: GPI-anchor amidated serine. The propeptide at 1002-1020 (SSLLSLLLPSLGFLVYSEF) is removed in mature form.

It belongs to the immunoglobulin superfamily. Contactin family. As to quaternary structure, monomer. Interacts with CNTNAP1 in cis form. Binds to the carbonic-anhydrase like domain of PTPRZ1. Interacts with NOTCH1 and TNR. Detected in a complex with NRCAM and PTPRB. Interacts with TASOR. As to expression, expressed in the ovary and in Sertoli cells of the testis.

It localises to the cell membrane. In terms of biological role, contactins mediate cell surface interactions during nervous system development. Involved in the formation of paranodal axo-glial junctions in myelinated peripheral nerves and in the signaling between axons and myelinating glial cells via its association with CNTNAP1. Participates in oligodendrocytes generation by acting as a ligand of NOTCH1. Its association with NOTCH1 promotes NOTCH1 activation through the released notch intracellular domain (NICD) and subsequent translocation to the nucleus. Interaction with TNR induces a repulsion of neurons and an inhibition of neurite outgrowth. The polypeptide is Contactin-1 (Cntn1) (Mus musculus (Mouse)).